The primary structure comprises 155 residues: Troponin C, isoform 2 (155 aa).

EF-hand domains are found at residues 11–46 (EQIA…MGQP), 47–82 (FDRQ…FIVE), 87–122 (AMQK…LDDQ), and 123–155 (LTEQ…MTGE). Positions 60, 62, 64, 66, and 71 each coordinate Ca(2+). Residues Asp136, Asp138, Ser140, Thr142, and Glu147 each coordinate Ca(2+).

This sequence belongs to the troponin C family. In terms of tissue distribution, accumulates almost exclusively in larval muscles.

This is Troponin C, isoform 2 (TpnC47D) from Drosophila melanogaster (Fruit fly).